Reading from the N-terminus, the 336-residue chain is UDP-N-acetylglucosamine--N-acetylmuramyl-(pentapeptide) pyrophosphoryl-undecaprenol N-acetylglucosamine transferase (336 aa).

UDP-N-acetyl-alpha-D-glucosamine-binding positions include 10–12 (TGG), Asn124, Arg157, Ser179, and Gln277.

This sequence belongs to the glycosyltransferase 28 family. MurG subfamily.

Its subcellular location is the cell inner membrane. The enzyme catalyses di-trans,octa-cis-undecaprenyl diphospho-N-acetyl-alpha-D-muramoyl-L-alanyl-D-glutamyl-meso-2,6-diaminopimeloyl-D-alanyl-D-alanine + UDP-N-acetyl-alpha-D-glucosamine = di-trans,octa-cis-undecaprenyl diphospho-[N-acetyl-alpha-D-glucosaminyl-(1-&gt;4)]-N-acetyl-alpha-D-muramoyl-L-alanyl-D-glutamyl-meso-2,6-diaminopimeloyl-D-alanyl-D-alanine + UDP + H(+). The protein operates within cell wall biogenesis; peptidoglycan biosynthesis. Its function is as follows. Cell wall formation. Catalyzes the transfer of a GlcNAc subunit on undecaprenyl-pyrophosphoryl-MurNAc-pentapeptide (lipid intermediate I) to form undecaprenyl-pyrophosphoryl-MurNAc-(pentapeptide)GlcNAc (lipid intermediate II). This is UDP-N-acetylglucosamine--N-acetylmuramyl-(pentapeptide) pyrophosphoryl-undecaprenol N-acetylglucosamine transferase from Wolinella succinogenes (strain ATCC 29543 / DSM 1740 / CCUG 13145 / JCM 31913 / LMG 7466 / NCTC 11488 / FDC 602W) (Vibrio succinogenes).